The sequence spans 141 residues: ATP synthase epsilon chain (141 aa).

It belongs to the ATPase epsilon chain family. F-type ATPases have 2 components, CF(1) - the catalytic core - and CF(0) - the membrane proton channel. CF(1) has five subunits: alpha(3), beta(3), gamma(1), delta(1), epsilon(1). CF(0) has three main subunits: a, b and c.

It localises to the cell inner membrane. Its function is as follows. Produces ATP from ADP in the presence of a proton gradient across the membrane. The polypeptide is ATP synthase epsilon chain (Pseudomonas syringae pv. syringae (strain B728a)).